Consider the following 39-residue polypeptide: Contryphan-Cal1 (39 aa).

The N-terminal stretch at 1 to 20 (MTRTAVLLLTLLFLVAMAAS) is a signal peptide. The cysteines at positions 29 and 35 are disulfide-linked.

Expressed by the venom duct.

It is found in the secreted. In terms of biological role, probable neurotoxin. The chain is Contryphan-Cal1 from Californiconus californicus (California cone).